Here is a 317-residue protein sequence, read N- to C-terminus: NADPH-dependent D-xylose reductase (317 aa).

The active-site Proton donor is tyrosine 47. Histidine 109 lines the substrate pocket. NADP(+) contacts are provided by residues 164 to 165, 213 to 222, and 269 to 279; these read SN, SSFGPQSFVE, and KSNNPDRLLSN.

Belongs to the aldo/keto reductase family.

The enzyme catalyses xylitol + NAD(+) = D-xylose + NADH + H(+). It catalyses the reaction xylitol + NADP(+) = D-xylose + NADPH + H(+). The protein operates within carbohydrate metabolism; D-xylose degradation. Functionally, reduces D-xylose into xylitol. Preferentially utilizes NADPH as a cosubstrate. This chain is NADPH-dependent D-xylose reductase (XYL1), found in Meyerozyma guilliermondii (strain ATCC 6260 / CBS 566 / DSM 6381 / JCM 1539 / NBRC 10279 / NRRL Y-324) (Yeast).